The chain runs to 170 residues: Photosystem II extrinsic protein V (170 aa).

Positions 1-33 are cleaved as a signal peptide; that stretch reads MASLFSTLQRSLKGLLILVPVLIGLVLASPAEA. Heme c contacts are provided by C70, C73, H74, and M137.

It belongs to the cytochrome c family. PsbV subfamily. In terms of assembly, PSII is composed of 1 copy each of membrane proteins PsbA, PsbB, PsbC, PsbD, PsbE, PsbF, PsbH, PsbI, PsbJ, PsbK, PsbL, PsbM, PsbT, PsbX, PsbY, PsbZ, Psb30/Ycf12, peripheral proteins PsbO, CyanoQ (PsbQ), PsbU, PsbV and a large number of cofactors. It forms dimeric complexes. It depends on heme c as a cofactor.

Its subcellular location is the cellular thylakoid membrane. Functionally, one of the extrinsic, lumenal subunits of photosystem II (PSII). PSII is a light-driven water plastoquinone oxidoreductase, using light energy to abstract electrons from H(2)O, generating a proton gradient subsequently used for ATP formation. The extrinsic proteins stabilize the structure of photosystem II oxygen-evolving complex (OEC), the ion environment of oxygen evolution and protect the OEC against heat-induced inactivation. Low-potential cytochrome c that plays a role in the OEC of PSII. The polypeptide is Photosystem II extrinsic protein V (Parasynechococcus marenigrum (strain WH8102)).